A 439-amino-acid chain; its full sequence is O-fucosyltransferase 13 (439 aa).

Residues 8–28 (PLFVFVLTFSLLLVVILLSPS) traverse the membrane as a helical; Signal-anchor for type II membrane protein segment. 2 N-linked (GlcNAc...) asparagine glycosylation sites follow: Asn-104 and Asn-119. Position 238–240 (238–240 (HLR)) interacts with substrate. N-linked (GlcNAc...) asparagine glycosylation is present at Asn-293.

It belongs to the glycosyltransferase GT106 family.

The protein localises to the membrane. The protein operates within glycan metabolism. The polypeptide is O-fucosyltransferase 13 (Arabidopsis thaliana (Mouse-ear cress)).